The following is a 271-amino-acid chain: p-hydroxybenzoate hydroxylase transcriptional activator (271 aa).

The HTH iclR-type domain occupies 23–83 (IAGLAKGLAL…TDEHYFWLTH (61 aa)). The segment at residues 45–64 (VTQVAERTGISRTAARRYLK) is a DNA-binding region (H-T-H motif). Residues 98–271 (LPKVAQSFLN…NTANELRNLV (174 aa)) form the IclR-ED domain.

In terms of biological role, positive regulator of the pobA gene for p-hydroxybenzoate hydroxylase. This is p-hydroxybenzoate hydroxylase transcriptional activator (pobR) from Acinetobacter baylyi (strain ATCC 33305 / BD413 / ADP1).